Reading from the N-terminus, the 227-residue chain is Uracil-DNA glycosylase (227 aa).

The active-site Proton acceptor is the aspartate 64.

Belongs to the uracil-DNA glycosylase (UDG) superfamily. UNG family.

The protein resides in the cytoplasm. The enzyme catalyses Hydrolyzes single-stranded DNA or mismatched double-stranded DNA and polynucleotides, releasing free uracil.. In terms of biological role, excises uracil residues from the DNA which can arise as a result of misincorporation of dUMP residues by DNA polymerase or due to deamination of cytosine. This Serratia proteamaculans (strain 568) protein is Uracil-DNA glycosylase.